The following is a 203-amino-acid chain: Tic20 family protein Ycf60 (203 aa).

5 helical membrane passes run 2–22 (IRLF…RLAI), 51–71 (IIPY…YVLP), 84–104 (ILLP…VTFF), 131–151 (ILLF…PIEF), and 153–173 (ISFI…STIT).

This sequence belongs to the Tic20 family.

It is found in the plastid. The protein resides in the chloroplast membrane. This Porphyra purpurea (Red seaweed) protein is Tic20 family protein Ycf60 (ycf60).